The following is a 321-amino-acid chain: Malate dehydrogenase (321 aa).

Residues 11–16 (GSGNIG) and D35 each bind NAD(+). Substrate is bound by residues R84 and R90. NAD(+)-binding positions include N97 and 120–122 (ITN). Residues N122 and R153 each coordinate substrate. Catalysis depends on H177, which acts as the Proton acceptor.

Belongs to the LDH/MDH superfamily. MDH type 3 family.

It carries out the reaction (S)-malate + NAD(+) = oxaloacetate + NADH + H(+). Catalyzes the reversible oxidation of malate to oxaloacetate. In Rickettsia peacockii (strain Rustic), this protein is Malate dehydrogenase.